The primary structure comprises 198 residues: MIRRSSGFTLVEMLLALAILAALSVAAVTVLQNVMRADTLTRDKSGRMQALQQTFSQMAADFSQIIPRRSRDSASLFFAGRFQLGSDDGAIAFSRNGWPNPLGLLPRSEIQNVSYRLRGSQLERLNYDQQDPLPGSQPTVTIVLRDVRAFGLRFYASGRWQDEWQQAQTLPQGLEVTLTLEPYGEIRRLFLLTPGDSR.

The propeptide at M1–G7 is leader sequence. Residue F8 is modified to N-methylphenylalanine. Residues F8–V28 traverse the membrane as a helical segment.

It belongs to the GSP J family. As to quaternary structure, type II secretion is composed of four main components: the outer membrane complex, the inner membrane complex, the cytoplasmic secretion ATPase and the periplasm-spanning pseudopilus. Interacts with core component PulG. Cleaved by prepilin peptidase. In terms of processing, methylated by prepilin peptidase at the amino group of the N-terminal phenylalanine once the leader sequence is cleaved by prepilin peptidase.

The protein resides in the cell inner membrane. Functionally, component of the type II secretion system required for the energy-dependent secretion of extracellular factors such as proteases and toxins from the periplasm. Part of the pseudopilus tip complex that is critical for the recognition and binding of secretion substrates. In Klebsiella pneumoniae, this protein is Type II secretion system protein J (pulJ).